The primary structure comprises 267 residues: Thiazole synthase (267 aa).

Lys110 serves as the catalytic Schiff-base intermediate with DXP. Residues Gly171, 197 to 198 (AG), and 219 to 220 (NT) contribute to the 1-deoxy-D-xylulose 5-phosphate site.

The protein belongs to the ThiG family. As to quaternary structure, homotetramer. Forms heterodimers with either ThiH or ThiS.

The protein localises to the cytoplasm. The enzyme catalyses [ThiS sulfur-carrier protein]-C-terminal-Gly-aminoethanethioate + 2-iminoacetate + 1-deoxy-D-xylulose 5-phosphate = [ThiS sulfur-carrier protein]-C-terminal Gly-Gly + 2-[(2R,5Z)-2-carboxy-4-methylthiazol-5(2H)-ylidene]ethyl phosphate + 2 H2O + H(+). The protein operates within cofactor biosynthesis; thiamine diphosphate biosynthesis. Functionally, catalyzes the rearrangement of 1-deoxy-D-xylulose 5-phosphate (DXP) to produce the thiazole phosphate moiety of thiamine. Sulfur is provided by the thiocarboxylate moiety of the carrier protein ThiS. In vitro, sulfur can be provided by H(2)S. The sequence is that of Thiazole synthase from Maricaulis maris (strain MCS10) (Caulobacter maris).